Consider the following 115-residue polypeptide: Cytochrome c (115 aa).

Cysteine 26, cysteine 29, histidine 30, and methionine 91 together coordinate heme c.

This sequence belongs to the cytochrome c family. Binds 1 heme c group covalently per subunit.

Its subcellular location is the mitochondrion intermembrane space. Functionally, electron carrier protein. The oxidized form of the cytochrome c heme group can accept an electron from the heme group of the cytochrome c1 subunit of cytochrome reductase. Cytochrome c then transfers this electron to the cytochrome oxidase complex, the final protein carrier in the mitochondrial electron-transport chain. The polypeptide is Cytochrome c (Theileria parva (East coast fever infection agent)).